A 282-amino-acid polypeptide reads, in one-letter code: NADPH-dependent 7-cyano-7-deazaguanine reductase (282 aa).

Substrate is bound at residue 88–90 (IES). Residue 90-91 (SK) participates in NADPH binding. C190 (thioimide intermediate) is an active-site residue. Catalysis depends on D197, which acts as the Proton donor. 229–230 (HE) provides a ligand contact to substrate. 258–259 (RG) lines the NADPH pocket.

It belongs to the GTP cyclohydrolase I family. QueF type 2 subfamily. As to quaternary structure, homodimer.

It localises to the cytoplasm. The enzyme catalyses 7-aminomethyl-7-carbaguanine + 2 NADP(+) = 7-cyano-7-deazaguanine + 2 NADPH + 3 H(+). Its pathway is tRNA modification; tRNA-queuosine biosynthesis. In terms of biological role, catalyzes the NADPH-dependent reduction of 7-cyano-7-deazaguanine (preQ0) to 7-aminomethyl-7-deazaguanine (preQ1). The protein is NADPH-dependent 7-cyano-7-deazaguanine reductase of Escherichia coli O139:H28 (strain E24377A / ETEC).